A 75-amino-acid chain; its full sequence is Iota-conotoxin-like R11.3 (75 aa).

The N-terminal stretch at 1–19 (MKLCLTFLLVLMILASVTG) is a signal peptide. The propeptide occupies 20 to 34 (EKLSEQTLRRAARKN). 4 disulfides stabilise this stretch: cysteine 39–cysteine 53, cysteine 46–cysteine 58, cysteine 52–cysteine 63, and cysteine 57–cysteine 70.

The protein belongs to the conotoxin I1 superfamily. As to expression, expressed by the venom duct.

It is found in the secreted. In terms of biological role, iota-conotoxins bind to voltage-gated sodium channels (Nav) and act as agonists by shifting the voltage-dependence of activation to more hyperpolarized levels. Produces general excitatory symptoms. This is Iota-conotoxin-like R11.3 from Conus radiatus (Rayed cone).